The primary structure comprises 275 residues: MPELPEVEVTRRGIEPFVAGRRVERVDVRTEMLRWPVPAGLAEQLRAREVLAVERRGKYLLFEVDAGWFIVHLGMTGTLRVLPADGLPVAAKHDHIDWIFDEFVLRFRDPRRFGAVLWHPREAGDVHAHPLLASLGVEPFSPAFTGALLHARTRGRTVSVKQALLAGDMVVGVGNIYASESLFRAGIRPTTAAGKVSLPRYERLADAVRATLADAIERGGSTLRDFVGSNGESGYFQLDCFVYDRAGQPCRVCNTPIRQIVQGQRSTYFCPTCQR.

Pro2 (schiff-base intermediate with DNA) is an active-site residue. Glu3 functions as the Proton donor in the catalytic mechanism. Lys58 functions as the Proton donor; for beta-elimination activity in the catalytic mechanism. Residues His93, Arg111, and Arg156 each coordinate DNA. An FPG-type zinc finger spans residues 241 to 275; sequence FVYDRAGQPCRVCNTPIRQIVQGQRSTYFCPTCQR. Residue Arg265 is the Proton donor; for delta-elimination activity of the active site.

It belongs to the FPG family. Monomer. The cofactor is Zn(2+).

It catalyses the reaction Hydrolysis of DNA containing ring-opened 7-methylguanine residues, releasing 2,6-diamino-4-hydroxy-5-(N-methyl)formamidopyrimidine.. It carries out the reaction 2'-deoxyribonucleotide-(2'-deoxyribose 5'-phosphate)-2'-deoxyribonucleotide-DNA = a 3'-end 2'-deoxyribonucleotide-(2,3-dehydro-2,3-deoxyribose 5'-phosphate)-DNA + a 5'-end 5'-phospho-2'-deoxyribonucleoside-DNA + H(+). Its function is as follows. Involved in base excision repair of DNA damaged by oxidation or by mutagenic agents. Acts as a DNA glycosylase that recognizes and removes damaged bases. Has a preference for oxidized purines, such as 7,8-dihydro-8-oxoguanine (8-oxoG). Has AP (apurinic/apyrimidinic) lyase activity and introduces nicks in the DNA strand. Cleaves the DNA backbone by beta-delta elimination to generate a single-strand break at the site of the removed base with both 3'- and 5'-phosphates. The polypeptide is Formamidopyrimidine-DNA glycosylase (Burkholderia lata (strain ATCC 17760 / DSM 23089 / LMG 22485 / NCIMB 9086 / R18194 / 383)).